The primary structure comprises 301 residues: MLPYATAAEAEAALGRAMTAAESLWFRYSAGIPDYVLFWHNILFLFVVFTLAPLPVALLELRAPAAVGPFKLQPKVRLSREEFFRCYRDVMRLFFLVIGPLQLVSYPTVKMVGIHTGLPLPSLGEMAAQLLVYFLVEDYLNYWIHRLLHGEWGYEKIHRVHHEFTAPIGFAAPYAHWAEVLILGIPSFVGPALAPGHMITFWLWIVLRQMEAIETHSGFDFPFNLTKYIPFYGGAEYHDYHHYVGRQSQSNFASVFTYCDYLYGTDKGYRYHKAYQAKMKALGQTEGEKADSNGLSYAKLD.

3 helical membrane-spanning segments follow: residues 36 to 56 (VLFWHNILFLFVVFTLAPLPV), 94 to 114 (FFLVIGPLQLVSYPTVKMVGI), and 187 to 207 (SFVGPALAPGHMITFWLWIVL). The Fatty acid hydroxylase domain occupies 131 to 265 (LVYFLVEDYL…FTYCDYLYGT (135 aa)).

This sequence belongs to the sterol desaturase family. As to quaternary structure, homodimer. As to expression, expressed ubiquitously.

Its subcellular location is the endoplasmic reticulum membrane. The enzyme catalyses a long-chain fatty aldehyde + 2 NADPH + O2 + H(+) = a long-chain alkane + formate + 2 NADP(+) + H2O. Its function is as follows. Aldehyde decarbonylase involved in the conversion of aldehydes to alkanes. Core component of a very-long-chain alkane synthesis complex. In Oryza sativa subsp. japonica (Rice), this protein is Very-long-chain aldehyde decarbonylase GL1-10.